A 155-amino-acid polypeptide reads, in one-letter code: Large ribosomal subunit protein uL30 (155 aa).

This sequence belongs to the universal ribosomal protein uL30 family. In terms of assembly, part of the 50S ribosomal subunit.

The chain is Large ribosomal subunit protein uL30 from Cenarchaeum symbiosum (strain A).